A 239-amino-acid chain; its full sequence is LexA repressor (239 aa).

Residues 27–47 (FDEMKDALDLASKSGIHRLIT) constitute a DNA-binding region (H-T-H motif). Catalysis depends on for autocatalytic cleavage activity residues S159 and K197.

This sequence belongs to the peptidase S24 family. In terms of assembly, homodimer.

It catalyses the reaction Hydrolysis of Ala-|-Gly bond in repressor LexA.. Its function is as follows. Represses a number of genes involved in the response to DNA damage (SOS response), including recA and lexA. In the presence of single-stranded DNA, RecA interacts with LexA causing an autocatalytic cleavage which disrupts the DNA-binding part of LexA, leading to derepression of the SOS regulon and eventually DNA repair. The chain is LexA repressor from Rhizobium radiobacter (Agrobacterium tumefaciens).